Here is a 149-residue protein sequence, read N- to C-terminus: Large ribosomal subunit protein bL9 (149 aa).

This sequence belongs to the bacterial ribosomal protein bL9 family.

Its function is as follows. Binds to the 23S rRNA. The polypeptide is Large ribosomal subunit protein bL9 (Buchnera aphidicola subsp. Cinara cedri (strain Cc)).